We begin with the raw amino-acid sequence, 295 residues long: Bifunctional protein FolD (295 aa).

NADP(+)-binding positions include 166-168, Ser-191, and Ile-232; that span reads GRS.

It belongs to the tetrahydrofolate dehydrogenase/cyclohydrolase family. In terms of assembly, homodimer.

It carries out the reaction (6R)-5,10-methylene-5,6,7,8-tetrahydrofolate + NADP(+) = (6R)-5,10-methenyltetrahydrofolate + NADPH. It catalyses the reaction (6R)-5,10-methenyltetrahydrofolate + H2O = (6R)-10-formyltetrahydrofolate + H(+). It participates in one-carbon metabolism; tetrahydrofolate interconversion. Its function is as follows. Catalyzes the oxidation of 5,10-methylenetetrahydrofolate to 5,10-methenyltetrahydrofolate and then the hydrolysis of 5,10-methenyltetrahydrofolate to 10-formyltetrahydrofolate. In Rhodopseudomonas palustris (strain BisB18), this protein is Bifunctional protein FolD.